A 488-amino-acid polypeptide reads, in one-letter code: Signal recognition particle receptor FtsY (488 aa).

Residues 14 to 82 (DTAPEDVSKP…AVPDDAVHGG (69 aa)) are disordered. Low complexity predominate over residues 32-67 (VGTSSTGSPVGTGAAMPAAQDAPSPAAPHAIATPDD). GTP-binding positions include 287-294 (GVNGVGKT), 369-373 (DTAGR), and 433-436 (TKLD).

Belongs to the GTP-binding SRP family. FtsY subfamily. Part of the signal recognition particle protein translocation system, which is composed of SRP and FtsY. SRP is a ribonucleoprotein composed of Ffh and a 4.5S RNA molecule.

The protein localises to the cell inner membrane. The protein resides in the cytoplasm. It catalyses the reaction GTP + H2O = GDP + phosphate + H(+). In terms of biological role, involved in targeting and insertion of nascent membrane proteins into the cytoplasmic membrane. Acts as a receptor for the complex formed by the signal recognition particle (SRP) and the ribosome-nascent chain (RNC). Interaction with SRP-RNC leads to the transfer of the RNC complex to the Sec translocase for insertion into the membrane, the hydrolysis of GTP by both Ffh and FtsY, and the dissociation of the SRP-FtsY complex into the individual components. In Nitratidesulfovibrio vulgaris (strain ATCC 29579 / DSM 644 / CCUG 34227 / NCIMB 8303 / VKM B-1760 / Hildenborough) (Desulfovibrio vulgaris), this protein is Signal recognition particle receptor FtsY.